The sequence spans 194 residues: Ras-related protein Rab-22A (194 aa).

Position 12–20 (12–20 (GDTGVGKSS)) interacts with GTP. Residues 34–42 (INPTIGASF) carry the Effector region motif. GTP-binding positions include 60–64 (DTAGQ), 118–121 (NKCD), and 148–150 (SAK). The segment at 174–194 (PSGGKGFKLRRQPSEPKRSCC) is disordered. Basic and acidic residues predominate over residues 185–194 (QPSEPKRSCC). 2 S-geranylgeranyl cysteine lipidation sites follow: cysteine 193 and cysteine 194.

The protein belongs to the small GTPase superfamily. Rab family. Interacts directly with ZFYVE20. Binds EEA1. Interacts (in its GTP-bound form) with RABGEF1. Interacts (in its GTP-bound form) with RINL.

The protein localises to the endosome membrane. It is found in the cell membrane. It localises to the early endosome. The protein resides in the late endosome. Its subcellular location is the cell projection. The protein localises to the ruffle. It is found in the cytoplasmic vesicle. It localises to the phagosome. The protein resides in the phagosome membrane. Its function is as follows. Plays a role in endocytosis and intracellular protein transport. Mediates trafficking of TF from early endosomes to recycling endosomes. Required for NGF-mediated endocytosis of NTRK1, and subsequent neurite outgrowth. Binds GTP and GDP and has low GTPase activity. Alternates between a GTP-bound active form and a GDP-bound inactive form. The polypeptide is Ras-related protein Rab-22A (RAB22A) (Homo sapiens (Human)).